Consider the following 445-residue polypeptide: tRNA-2-methylthio-N(6)-dimethylallyladenosine synthase (445 aa).

In terms of domain architecture, MTTase N-terminal spans 4–121 (NKIYIKTWGC…LPNMIQEVKK (118 aa)). [4Fe-4S] cluster-binding residues include cysteine 13, cysteine 50, cysteine 84, cysteine 158, cysteine 162, and cysteine 165. The region spanning 144 to 376 (RKPKVTAFVS…QTLIRNNTTM (233 aa)) is the Radical SAM core domain. The region spanning 379-442 (QKMLGSIQSV…PNSLRGSYEK (64 aa)) is the TRAM domain.

The protein belongs to the methylthiotransferase family. MiaB subfamily. Monomer. Requires [4Fe-4S] cluster as cofactor.

It is found in the cytoplasm. The catalysed reaction is N(6)-dimethylallyladenosine(37) in tRNA + (sulfur carrier)-SH + AH2 + 2 S-adenosyl-L-methionine = 2-methylsulfanyl-N(6)-dimethylallyladenosine(37) in tRNA + (sulfur carrier)-H + 5'-deoxyadenosine + L-methionine + A + S-adenosyl-L-homocysteine + 2 H(+). In terms of biological role, catalyzes the methylthiolation of N6-(dimethylallyl)adenosine (i(6)A), leading to the formation of 2-methylthio-N6-(dimethylallyl)adenosine (ms(2)i(6)A) at position 37 in tRNAs that read codons beginning with uridine. This chain is tRNA-2-methylthio-N(6)-dimethylallyladenosine synthase, found in Buchnera aphidicola subsp. Baizongia pistaciae (strain Bp).